Reading from the N-terminus, the 130-residue chain is Transcription antitermination protein NusB (130 aa).

Belongs to the NusB family.

In terms of biological role, involved in transcription antitermination. Required for transcription of ribosomal RNA (rRNA) genes. Binds specifically to the boxA antiterminator sequence of the ribosomal RNA (rrn) operons. The polypeptide is Transcription antitermination protein NusB (Sulfurovum sp. (strain NBC37-1)).